The sequence spans 180 residues: MTFRILGIDPGLRLTGFGVIEKTGEKLAYVASGTIKTTTGKGSEIEDLPTRLKIILDSLAEVIDNYQPQQAAIEKVFVNVNPQSTLLLGQARGAAISALVLQGLPIAEYTALQVKQSVVGHGHAAKDQVQEMVKRLLNLPGLPRPDSADALACAICHAHGGQGLGKLATAGFRVKGGRLI.

Active-site residues include Asp9, Glu74, and Asp146. Mg(2+) contacts are provided by Asp9, Glu74, and Asp146.

The protein belongs to the RuvC family. In terms of assembly, homodimer which binds Holliday junction (HJ) DNA. The HJ becomes 2-fold symmetrical on binding to RuvC with unstacked arms; it has a different conformation from HJ DNA in complex with RuvA. In the full resolvosome a probable DNA-RuvA(4)-RuvB(12)-RuvC(2) complex forms which resolves the HJ. Requires Mg(2+) as cofactor.

It is found in the cytoplasm. It catalyses the reaction Endonucleolytic cleavage at a junction such as a reciprocal single-stranded crossover between two homologous DNA duplexes (Holliday junction).. In terms of biological role, the RuvA-RuvB-RuvC complex processes Holliday junction (HJ) DNA during genetic recombination and DNA repair. Endonuclease that resolves HJ intermediates. Cleaves cruciform DNA by making single-stranded nicks across the HJ at symmetrical positions within the homologous arms, yielding a 5'-phosphate and a 3'-hydroxyl group; requires a central core of homology in the junction. The consensus cleavage sequence is 5'-(A/T)TT(C/G)-3'. Cleavage occurs on the 3'-side of the TT dinucleotide at the point of strand exchange. HJ branch migration catalyzed by RuvA-RuvB allows RuvC to scan DNA until it finds its consensus sequence, where it cleaves and resolves the cruciform DNA. This chain is Crossover junction endodeoxyribonuclease RuvC, found in Methylobacillus flagellatus (strain ATCC 51484 / DSM 6875 / VKM B-1610 / KT).